We begin with the raw amino-acid sequence, 388 residues long: Pre-mRNA-splicing factor cwf2 (388 aa).

Residues 43-63 are disordered; the sequence is VKRKKQPARKQIETRPEYEME. The segment at 111-138 adopts a C3H1-type zinc-finger fold; sequence NPGSFFCLYFARGMCSEGSKCEYLHRLP. The RRM domain occupies 174-248; the sequence is YTLYVGGITP…ECLNVRWATT (75 aa). The segment at 331–352 is disordered; sequence PNKSQSEEGSNDDHKSVTTTES.

The protein belongs to the RRM CWC2 family. Belongs to the 40S cdc5-associated complex (or cwf complex), a spliceosome sub-complex reminiscent of a late-stage spliceosome composed of the U2, U5 and U6 snRNAs and at least brr2, cdc5, cwf2/prp3, cwf3/syf1, cwf4/syf3, cwf5/ecm2, spp42/cwf6, cwf7/spf27, cwf8, cwf9, cwf10, cwf11, cwf12, prp45/cwf13, cwf14, cwf15, cwf16, cwf17, cwf18, cwf19, cwf20, cwf21, cwf22, cwf23, cwf24, cwf25, cwf26, cyp7/cwf27, cwf28, cwf29/ist3, lea1, msl1, prp5/cwf1, prp10, prp12/sap130, prp17, prp22, sap61, sap62, sap114, sap145, slu7, smb1, smd1, smd3, smf1, smg1 and syf2.

Its subcellular location is the nucleus. Its function is as follows. Involved in the first step of pre-mRNA splicing. Required for cell growth and cell cycle control. Plays a role in the levels of the U1, U4, U5 and U6 snRNAs and the maintenance of the U4/U6 snRNA complex. May provide the link between the 'nineteen complex' NTC spliceosome protein complex and the spliceosome through the U6 snRNA. Associates predominantly with U6 snRNAs in assembled active spliceosomes. Binds directly to the internal stem-loop (ISL) domain of the U6 snRNA and to the pre-mRNA intron near the 5' splice site during the activation and catalytic phases of the spliceosome cycle. Involved in pre-mRNA splicing. In Schizosaccharomyces pombe (strain 972 / ATCC 24843) (Fission yeast), this protein is Pre-mRNA-splicing factor cwf2 (cwf2).